A 902-amino-acid polypeptide reads, in one-letter code: Gamma-tubulin complex component 2 (902 aa).

Position 83 is a phosphotyrosine (tyrosine 83). The interval 875–902 (ERSQKAAPQVPVLRGPPAPAPRVAVTAQ) is disordered.

Belongs to the TUBGCP family. In terms of assembly, component of the gamma-tubulin ring complex (gTuRC) consisting of TUBGCP2, TUBGCP3, TUBGCP4, TUBGCP5 and TUBGCP6 and gamma-tubulin TUBG1 or TUBG2. TUBGCP2, TUBGCP3, TUBGCP4, TUBGCP5 and TUBGCP6 assemble in a 5:5:2:1:1 stoichiometry; each is associated with a gamma-tubulin, thereby arranging 14 gamma-tubulins in a helical manner. Gamma-tubulin at the first position is blocked by TUBGCP3 at the last position, allowing 13 protafilaments to grow into a microtubule. The gTuRC (via TUBGCP3 and TUBGCP6) interacts with ACTB and MZT1; the interactions form a luminal bridge that stabilizes the initial structure during complex assembly. The gTuRC (via TUBGCP2) interacts with MZT2A/MZT2B and CDK5RAP2 (via CM1 motif); the interactions play a role in gTuRC activation. Interacts with ATF5; the ATF5:PCNT:polyglutamylated tubulin (PGT) tripartite unites the mother centriole and the pericentriolar material (PCM) in the centrosome.

Its subcellular location is the cytoplasm. The protein resides in the cytoskeleton. It localises to the microtubule organizing center. The protein localises to the centrosome. Its function is as follows. Component of the gamma-tubulin ring complex (gTuRC) which mediates microtubule nucleation. The gTuRC regulates the minus-end nucleation of alpha-beta tubulin heterodimers that grow into microtubule protafilaments, a critical step in centrosome duplication and spindle formation. Plays a role in neuronal migration. This is Gamma-tubulin complex component 2 (TUBGCP2) from Pongo abelii (Sumatran orangutan).